Reading from the N-terminus, the 223-residue chain is MSDICDANKLKYRFRGYFPVVIDVETAGFNSQTDALLEIAVTLLKMDNEGVIGIDKTLHFHIEPFEGANLEPEALAFNGIDPTNPLRGAVSEKEAFLEIFKAVKKAQKASDCHRSIIVAHNAAFDHGFVSKAIERCDLKRSPFHPFATFDTATLAGLAIGHTVLAKACIMAGIPFDNKEAHSALYDTERTAELFCHIVNRWKSLGGWPLLAVDEQDAQSDTEA.

An Exonuclease domain is found at 20–194; the sequence is VVIDVETAGF…YDTERTAELF (175 aa). Positions 23, 25, 181, and 186 each coordinate Mg(2+). Catalysis depends on His-181, which acts as the Proton donor/acceptor.

This sequence belongs to the RNase T family. Homodimer. Requires Mg(2+) as cofactor.

In terms of biological role, trims short 3' overhangs of a variety of RNA species, leaving a one or two nucleotide 3' overhang. Responsible for the end-turnover of tRNA: specifically removes the terminal AMP residue from uncharged tRNA (tRNA-C-C-A). Also appears to be involved in tRNA biosynthesis. This chain is Ribonuclease T, found in Shewanella baltica (strain OS155 / ATCC BAA-1091).